Here is a 376-residue protein sequence, read N- to C-terminus: UPF0754 membrane protein SERP1382 (376 aa).

2 consecutive transmembrane segments (helical) span residues 4–24 (ILLV…TNMI) and 356–376 (TLGF…AIFV).

This sequence belongs to the UPF0754 family.

The protein localises to the cell membrane. This chain is UPF0754 membrane protein SERP1382, found in Staphylococcus epidermidis (strain ATCC 35984 / DSM 28319 / BCRC 17069 / CCUG 31568 / BM 3577 / RP62A).